The sequence spans 675 residues: MTIMDINQQIKQLRDTLRYHEYQYHVLDDPKIPDAEYDRLFHQLKALEQQHPELITADSPTQRVGAKPLAGFAQITHELPMLSLDNAFSDEEFNAFVKRIQDRLIVLPQPLTFCCEPKLDGLAVSIFYVNGVLTQAATRGDGTTGEDITLNIRTIRNIPLQLLTDNPPARLEVRGEVFMPHEGFNRLNERALEHGEKTFANPRNAAAGSLRQLDPKITSRRPLVFNAYSVGIAEGVELPATHYERLQWLKSVGIPVNSEVQLCDGSEKVLEFYRSMQQKRPTLGYDIDGTVLKINDIGLQRELGFISKAPRWAIAYKFPAQEELTRLNDVEFQVGRTGAITPVAKLAPVFVAGVTVSNATLHNGDEIARLDIAIGDTVVIRRAGDVIPQIIGVLHERRPANAQAIVFPTQCPVCGSKIVRIEGEAVARCTGGLFCDAQRKEALKHFVSRRAMDIDGVGAKLIEQLVDKELIRTPADLFKLDLITLMRLERMGEKSAQNALDSLEKAKNTTLARFIFALGIREVGEATALNLANHFKNLDALQAASPEQLQEVADVGEVVANRIYVFWREQHNIDAVNDLIAQGIHWETVETKEAGENPFKGKTVVLTGTLTQMGRNETKDLLQQLGAKAAGSVSAKTHFVIAGDNAGSKLTKAQELGVAVMSEAEFLAIVNAYKR.

Residues 34-38 (DAEYD), 83-84 (SL), and Glu-116 contribute to the NAD(+) site. Catalysis depends on Lys-118, which acts as the N6-AMP-lysine intermediate. Residues Arg-139, Glu-176, Lys-293, and Lys-317 each coordinate NAD(+). Residues Cys-411, Cys-414, Cys-429, and Cys-435 each coordinate Zn(2+). In terms of domain architecture, BRCT spans 594-675 (AGENPFKGKT…FLAIVNAYKR (82 aa)).

Belongs to the NAD-dependent DNA ligase family. LigA subfamily. Mg(2+) serves as cofactor. The cofactor is Mn(2+).

It carries out the reaction NAD(+) + (deoxyribonucleotide)n-3'-hydroxyl + 5'-phospho-(deoxyribonucleotide)m = (deoxyribonucleotide)n+m + AMP + beta-nicotinamide D-nucleotide.. Its function is as follows. DNA ligase that catalyzes the formation of phosphodiester linkages between 5'-phosphoryl and 3'-hydroxyl groups in double-stranded DNA using NAD as a coenzyme and as the energy source for the reaction. It is essential for DNA replication and repair of damaged DNA. In Mannheimia succiniciproducens (strain KCTC 0769BP / MBEL55E), this protein is DNA ligase.